The chain runs to 232 residues: Glycerol-3-phosphate acyltransferase (232 aa).

Transmembrane regions (helical) follow at residues 4 to 24 (FLAI…IIAG), 56 to 76 (AVTL…VAFF), 90 to 110 (IALN…TVFA), 124 to 144 (MLIG…ILAI), 147 to 167 (TRYV…IIAI), and 191 to 211 (SLDY…IYTH).

It belongs to the PlsY family. In terms of assembly, probably interacts with PlsX.

It localises to the cell inner membrane. It catalyses the reaction an acyl phosphate + sn-glycerol 3-phosphate = a 1-acyl-sn-glycero-3-phosphate + phosphate. It participates in lipid metabolism; phospholipid metabolism. Its function is as follows. Catalyzes the transfer of an acyl group from acyl-phosphate (acyl-PO(4)) to glycerol-3-phosphate (G3P) to form lysophosphatidic acid (LPA). This enzyme utilizes acyl-phosphate as fatty acyl donor, but not acyl-CoA or acyl-ACP. This is Glycerol-3-phosphate acyltransferase from Chlorobaculum parvum (strain DSM 263 / NCIMB 8327) (Chlorobium vibrioforme subsp. thiosulfatophilum).